The sequence spans 190 residues: Heme-binding protein 1 (190 aa).

It belongs to the HEBP family. Monomer. In terms of tissue distribution, ubiquitously expressed. Extremely abundant in liver.

It localises to the cytoplasm. May bind free porphyrinogens that may be present in the cell and thus facilitate removal of these potentially toxic compound. Binds with a high affinity to one molecule of heme or porphyrins. It binds metalloporphyrins, free porphyrins and N-methylprotoporphyrin with similar affinities. This chain is Heme-binding protein 1 (Hebp1), found in Mus musculus (Mouse).